Consider the following 143-residue polypeptide: 3-dehydroquinate dehydratase (143 aa).

The active-site Proton acceptor is Tyr-22. Residues Asn-73, His-79, and Asp-86 each contribute to the substrate site. The active-site Proton donor is the His-99. Residues Ile-100–Ser-101 and Arg-110 each bind substrate.

It belongs to the type-II 3-dehydroquinase family. In terms of assembly, homododecamer.

It carries out the reaction 3-dehydroquinate = 3-dehydroshikimate + H2O. Its pathway is metabolic intermediate biosynthesis; chorismate biosynthesis; chorismate from D-erythrose 4-phosphate and phosphoenolpyruvate: step 3/7. Functionally, catalyzes a trans-dehydration via an enolate intermediate. In Mycobacterium avium (strain 104), this protein is 3-dehydroquinate dehydratase.